A 125-amino-acid polypeptide reads, in one-letter code: Large ribosomal subunit protein bL12 (125 aa).

The protein belongs to the bacterial ribosomal protein bL12 family. In terms of assembly, homodimer. Part of the ribosomal stalk of the 50S ribosomal subunit. Forms a multimeric L10(L12)X complex, where L10 forms an elongated spine to which 2 to 4 L12 dimers bind in a sequential fashion. Binds GTP-bound translation factors.

Forms part of the ribosomal stalk which helps the ribosome interact with GTP-bound translation factors. Is thus essential for accurate translation. In Endomicrobium trichonymphae, this protein is Large ribosomal subunit protein bL12.